We begin with the raw amino-acid sequence, 360 residues long: LETM1 domain-containing protein 1 (360 aa).

The segment at 1 to 110 (MALSRVCWAR…KKARRIKTNM (110 aa)) is required and sufficient for mitochondrial import. At 1–137 (MALSRVCWAR…LRQFRRDVTK (137 aa)) the chain is on the cytoplasmic side. A helical transmembrane segment spans residues 138–158 (CLFLGILSIPPFANYLVFLLM). Residues 159–360 (YLFPRQLLIR…LSINYVGSRR (202 aa)) lie on the Mitochondrial intermembrane side of the membrane. Residues 186–360 (LRKQSHPEIL…LSINYVGSRR (175 aa)) form the Letm1 RBD domain.

As to quaternary structure, interacts with BRI3BP. Interacts (via C-terminal) with SMARCA4; the interaction regulates transcriptional expression of thermogenic genes in brown adipose tissue.

The protein resides in the mitochondrion outer membrane. The protein localises to the nucleus. It is found in the mitochondrion inner membrane. Its function is as follows. Plays an essential role for mitochondrial structure and function, as well as thermogenesis of brown adipocytes. In brown adipose tissue also localizes in the nucleus where it interacts with the chromatin remodeler SMARCA4 to regulate thermogenic genes expression, such as UCP1. May regulate phagocytosis and inflammatory responses to lipopolysaccharide in macrophages. Involved in tumorigenesis and may function as a negative regulator of the p53/TP53. The protein is LETM1 domain-containing protein 1 of Bos taurus (Bovine).